We begin with the raw amino-acid sequence, 427 residues long: C4-dicarboxylate transport protein (427 aa).

9 helical membrane passes run Ile5–His25, Leu44–Met64, Ile76–Val96, Ile142–Phe162, Val184–Phe206, Leu222–Ala242, Ile307–Phe327, Ile330–Gly350, and Ile352–Ile372.

It belongs to the dicarboxylate/amino acid:cation symporter (DAACS) (TC 2.A.23) family.

The protein localises to the cell inner membrane. Responsible for the transport of dicarboxylates such as succinate, fumarate, and malate from the periplasm across the membrane. The chain is C4-dicarboxylate transport protein from Aeromonas salmonicida (strain A449).